The chain runs to 343 residues: N-acetyl-gamma-glutamyl-phosphate reductase (343 aa).

Cysteine 147 is a catalytic residue.

The protein belongs to the NAGSA dehydrogenase family. Type 1 subfamily.

Its subcellular location is the cytoplasm. The enzyme catalyses N-acetyl-L-glutamate 5-semialdehyde + phosphate + NADP(+) = N-acetyl-L-glutamyl 5-phosphate + NADPH + H(+). It functions in the pathway amino-acid biosynthesis; L-arginine biosynthesis; N(2)-acetyl-L-ornithine from L-glutamate: step 3/4. Its function is as follows. Catalyzes the NADPH-dependent reduction of N-acetyl-5-glutamyl phosphate to yield N-acetyl-L-glutamate 5-semialdehyde. This is N-acetyl-gamma-glutamyl-phosphate reductase from Listeria monocytogenes serotype 4b (strain F2365).